The following is a 291-amino-acid chain: N-acetylmannosamine kinase (291 aa).

ATP contacts are provided by residues 5 to 12 and 132 to 139; these read AIDIGGTK and GVGGGVVS. Zn(2+)-binding residues include histidine 156, cysteine 166, cysteine 168, and cysteine 173.

This sequence belongs to the ROK (NagC/XylR) family. NanK subfamily. In terms of assembly, homodimer.

The catalysed reaction is an N-acyl-D-mannosamine + ATP = an N-acyl-D-mannosamine 6-phosphate + ADP + H(+). It participates in amino-sugar metabolism; N-acetylneuraminate degradation; D-fructose 6-phosphate from N-acetylneuraminate: step 2/5. Catalyzes the phosphorylation of N-acetylmannosamine (ManNAc) to ManNAc-6-P. This is N-acetylmannosamine kinase from Shigella boydii serotype 18 (strain CDC 3083-94 / BS512).